Reading from the N-terminus, the 60-residue chain is Large ribosomal subunit protein uL30 (60 aa).

This sequence belongs to the universal ribosomal protein uL30 family. As to quaternary structure, part of the 50S ribosomal subunit.

In Oceanobacillus iheyensis (strain DSM 14371 / CIP 107618 / JCM 11309 / KCTC 3954 / HTE831), this protein is Large ribosomal subunit protein uL30.